The following is a 670-amino-acid chain: Histone-lysine N-methyltransferase, H3 lysine-9 specific SUVH1 (670 aa).

Positions 53–140 (YPFSSSQANQ…RPISRPENMN (88 aa)) are disordered. Residues 68 to 79 (NQAQYPPQHQQP) show a composition bias toward low complexity. Over residues 123–133 (VKRRIPKKRPI) the composition is skewed to basic residues. The YDG domain maps to 211-357 (GIVPGVEIGD…HNTFKYKLVR (147 aa)). Positions 432-492 (FGCDCANLCK…TCKNKVTQMG (61 aa)) constitute a Pre-SET domain. 9 residues coordinate Zn(2+): Cys-434, Cys-436, Cys-440, Cys-447, Cys-449, Cys-475, Cys-479, Cys-481, and Cys-484. Residues 495-639 (VRLEVFKTAN…PMTELTYDYG (145 aa)) form the SET domain. S-adenosyl-L-methionine-binding positions include 505 to 507 (RGW), Asp-541, Tyr-543, Arg-593, and 596 to 597 (NH). Cys-599, Cys-658, Cys-660, and Cys-665 together coordinate Zn(2+). One can recognise a Post-SET domain in the interval 654 to 670 (GKRKCFCGSAYCRGSFG).

Belongs to the class V-like SAM-binding methyltransferase superfamily. Histone-lysine methyltransferase family. Suvar3-9 subfamily. In terms of tissue distribution, expressed in leaves stems and flowers.

The protein resides in the nucleus. It is found in the chromosome. Its subcellular location is the centromere. It carries out the reaction L-lysyl(9)-[histone H3] + 2 S-adenosyl-L-methionine = N(6),N(6)-dimethyl-L-lysyl(9)-[histone H3] + 2 S-adenosyl-L-homocysteine + 2 H(+). Histone methyltransferase. Methylates 'Lys-9' of histone H3. H3 'Lys-9' methylation represents a specific tag for epigenetic transcriptional repression. In Arabidopsis thaliana (Mouse-ear cress), this protein is Histone-lysine N-methyltransferase, H3 lysine-9 specific SUVH1 (SUVH1).